Here is a 213-residue protein sequence, read N- to C-terminus: Large ribosomal subunit protein uL1 (213 aa).

This sequence belongs to the universal ribosomal protein uL1 family. Part of the 50S ribosomal subunit.

In terms of biological role, binds directly to 23S rRNA. Probably involved in E site tRNA release. Its function is as follows. Protein L1 is also a translational repressor protein, it controls the translation of its operon by binding to its mRNA. The protein is Large ribosomal subunit protein uL1 of Methanococcus maripaludis (strain C5 / ATCC BAA-1333).